A 141-amino-acid chain; its full sequence is Protein C19orf12 homolog (141 aa).

Residues 37-57 form a helical membrane-spanning segment; it reads AVAFVGGLVGGPPGLAVGGAV.

Belongs to the C19orf12 family.

It localises to the mitochondrion. It is found in the mitochondrion membrane. The protein resides in the endoplasmic reticulum. The protein localises to the cytoplasm. Its subcellular location is the cytosol. The chain is Protein C19orf12 homolog from Bos taurus (Bovine).